The chain runs to 673 residues: F420-dependent formate dehydrogenase subunit alpha (673 aa).

The 57-residue stretch at 3–59 (FKIVNTICPYCGVGCGLGLVVKDGRVIGIHPNKRHPINEGKLCAKGNYCYQFIHSKD) folds into the 4Fe-4S Mo/W bis-MGD-type domain. 4 residues coordinate [4Fe-4S] cluster: Cys-10, Cys-13, Cys-17, and Cys-45. Position 131 (Sec-131) is a non-standard amino acid, selenocysteine.

The protein belongs to the prokaryotic molybdopterin-containing oxidoreductase family. As to quaternary structure, dimer of an alpha (FdhA) and a beta (FdhB) subunit. Requires [4Fe-4S] cluster as cofactor. It depends on Mo-bis(molybdopterin guanine dinucleotide) as a cofactor. Zn(2+) serves as cofactor.

It carries out the reaction oxidized coenzyme F420-(gamma-L-Glu)(n) + formate + 2 H(+) = reduced coenzyme F420-(gamma-L-Glu)(n) + CO2. Catalyzes the oxidation of formate to carbon dioxide, with coenzyme F420 as the electron acceptor. This Methanocaldococcus jannaschii (strain ATCC 43067 / DSM 2661 / JAL-1 / JCM 10045 / NBRC 100440) (Methanococcus jannaschii) protein is F420-dependent formate dehydrogenase subunit alpha (fdhA).